The following is a 351-amino-acid chain: Minor outer capsid protein P9 (351 aa).

Disordered regions lie at residues 245-281 (GGVP…DQPE) and 288-307 (KKVD…GNVS). Positions 288–297 (KKVDASKDAP) are enriched in basic and acidic residues.

Belongs to the phytoreovirus minor outer capsid protein P9 family.

The protein resides in the virion. It is found in the host cytoplasm. Minor outer capsid protein. The chain is Minor outer capsid protein P9 from Rice dwarf virus (RDV).